We begin with the raw amino-acid sequence, 210 residues long: Somatotropin (210 aa).

The signal sequence occupies residues 1-23; the sequence is MARVLVLLSVVLVSLLVNQGRAS. His38 contributes to the Zn(2+) binding site. Cys71 and Cys183 form a disulfide bridge. Glu192 serves as a coordination point for Zn(2+). An intrachain disulfide couples Cys200 to Cys208.

It belongs to the somatotropin/prolactin family.

It is found in the secreted. Functionally, growth hormone plays an important role in growth control. The protein is Somatotropin (gh) of Cyprinus carpio (Common carp).